The chain runs to 597 residues: Sodium/mannose cotransporter SLC5A10 (597 aa).

At 1–16 the chain is on the extracellular side; it reads MVADNSTSDPHAPGPQ. An N-linked (GlcNAc...) asparagine glycan is attached at Asn5. The helical transmembrane segment at 17–37 threads the bilayer; that stretch reads LSVTDIVVITVYFALNVAVGI. Residues 38–73 are Cytoplasmic-facing; that stretch reads WSSCRASRNTVSGYFLAGRDMTWWPIGASLFGSSEG. Position 49 is a phosphoserine (Ser49). A helical transmembrane segment spans residues 74–94; sequence SGLFIGLAGSGAAGGLAVAGF. At 95-100 the chain is on the extracellular side; the sequence is DWNATY. The helical transmembrane segment at 101–121 threads the bilayer; the sequence is VLLALAWVFGAIYISSEIVTL. At 122 to 137 the chain is on the cytoplasmic side; the sequence is AEYIQKRFGGQRIRMY. A helical membrane pass occupies residues 138–158; that stretch reads LSVLSLLLSVFTKISLDLYAG. At 159–171 the chain is on the extracellular side; it reads ALFVHICLGWNFY. Residues 172-194 form a helical membrane-spanning segment; the sequence is LSTILTLTITALYTITGGLVAVI. Topologically, residues 195-200 are cytoplasmic; sequence YTDALQ. Residues 201 to 219 traverse the membrane as a helical segment; sequence TLIMVVGAVILAIKAFHQI. The Extracellular portion of the chain corresponds to 220–265; the sequence is DGYGQMEAAYARAIPSRTVANTTCHLPRADAMHMFRDPYTGDLPWT. The helical transmembrane segment at 266–286 threads the bilayer; sequence GMTFGLTIMATWYWCTDQVIV. Over 287 to 301 the chain is Cytoplasmic; it reads QRSLSARNLNHAKAG. A helical membrane pass occupies residues 302-322; that stretch reads SILASYLKMLPMGLMIMPGMI. Residues 323 to 367 are Extracellular-facing; that stretch reads SRALFPDEVGCVVPSECLRACGAEIGCSNIAYPKLVMELMPVGLR. Residues 368 to 390 form a helical membrane-spanning segment; it reads GLMIAVMMPALMSSLSSIFNSSS. Residues 391–410 are Cytoplasmic-facing; it reads TLFTMDIWRRLRPCASEREL. The chain crosses the membrane as a helical span at residues 411-431; that stretch reads LLVGRLVIVVLIGVSVAWIPV. Residues 432–444 lie on the Extracellular side of the membrane; that stretch reads LQGSNGGQLFIYM. Residues 445–465 form a helical membrane-spanning segment; sequence QSVTSSLAPPVTAVFTLGIFW. The Cytoplasmic segment spans residues 466 to 472; that stretch reads QRANEQG. Residues 473 to 493 form a helical membrane-spanning segment; the sequence is AFWGLLAGLAVGATRLVLEFL. At 494–514 the chain is on the extracellular side; sequence HPAPPCGAADTRPAVLSQLHY. The helical transmembrane segment at 515-535 threads the bilayer; it reads LHFAVALFVLTGAVAVGGSLL. Residues 536-576 are Cytoplasmic-facing; that stretch reads TPPPRRHQIENLTWWTLTRDLSLGAKAGDGQTPQRYTFWAR. A helical transmembrane segment spans residues 577–597; the sequence is VCGFNAILLMCVNIFFYAYFA.

This sequence belongs to the sodium:solute symporter (SSF) (TC 2.A.21) family. As to expression, expressed only in kidney.

The protein resides in the apical cell membrane. The enzyme catalyses D-mannose(out) + Na(+)(out) = D-mannose(in) + Na(+)(in). It catalyses the reaction D-fructopyranose(out) + Na(+)(out) = D-fructopyranose(in) + Na(+)(in). Functionally, electrogenic Na+-coupled sugar symporter that actively transports D-mannose or D-fructose at the plasma membrane, with a Na+ to sugar coupling ratio of 1:1. Transporter activity is driven by a transmembrane Na+ electrochemical gradient set by the Na+/K+ pump. Exclusively recognizes sugar substrates having a pyranose ring with an axial hydroxyl group on carbon 2. Has likely evolved to enable renal reabsorption of D-mannose, an important constituent of oligosaccharide chains of glycoproteins. Contributes to dietary D-fructose reabsorption from glomerular filtrate across the brush border of the kidney. The protein is Sodium/mannose cotransporter SLC5A10 (SLC5A10) of Oryctolagus cuniculus (Rabbit).